A 183-amino-acid chain; its full sequence is NADH-ubiquinone oxidoreductase chain 5 (183 aa).

Transmembrane regions (helical) follow at residues 7-27, 30-50, 111-131, and 144-164; these read FMCYLSILTFFMPMLVTGDNS, LFLGWEGVGLASYLLIHFWFT, AITLICILLLIGAVGKSAQIG, and TPVSALIHAATMVTAGVFMIA.

Belongs to the complex I subunit 5 family.

The protein localises to the mitochondrion inner membrane. It carries out the reaction a ubiquinone + NADH + 5 H(+)(in) = a ubiquinol + NAD(+) + 4 H(+)(out). In terms of biological role, core subunit of the mitochondrial membrane respiratory chain NADH dehydrogenase (Complex I) that is believed to belong to the minimal assembly required for catalysis. Complex I functions in the transfer of electrons from NADH to the respiratory chain. The immediate electron acceptor for the enzyme is believed to be ubiquinone. The protein is NADH-ubiquinone oxidoreductase chain 5 (NDH5) of Pisum sativum (Garden pea).